Consider the following 228-residue polypeptide: Ribosomal RNA small subunit methyltransferase G (228 aa).

Residues Gly-92, Phe-97, 115 to 117 (EAT), 143 to 144 (AE), and Arg-156 each bind S-adenosyl-L-methionine.

Belongs to the methyltransferase superfamily. RNA methyltransferase RsmG family.

Its subcellular location is the cytoplasm. In terms of biological role, specifically methylates the N7 position of a guanine in 16S rRNA. The polypeptide is Ribosomal RNA small subunit methyltransferase G (Thermosynechococcus vestitus (strain NIES-2133 / IAM M-273 / BP-1)).